Reading from the N-terminus, the 375-residue chain is Queuine tRNA-ribosyltransferase (375 aa).

Residue aspartate 89 is the Proton acceptor of the active site. Residues 89–93, aspartate 143, glutamine 187, and glycine 214 contribute to the substrate site; that span reads DSGGF. Residues 245–251 form an RNA binding region; the sequence is GVGKPED. Aspartate 264 (nucleophile) is an active-site residue. The segment at 269-273 is RNA binding; important for wobble base 34 recognition; sequence TRNAR. Zn(2+) is bound by residues cysteine 302, cysteine 304, cysteine 307, and histidine 333.

Belongs to the queuine tRNA-ribosyltransferase family. Homodimer. Within each dimer, one monomer is responsible for RNA recognition and catalysis, while the other monomer binds to the replacement base PreQ1. It depends on Zn(2+) as a cofactor.

The enzyme catalyses 7-aminomethyl-7-carbaguanine + guanosine(34) in tRNA = 7-aminomethyl-7-carbaguanosine(34) in tRNA + guanine. It participates in tRNA modification; tRNA-queuosine biosynthesis. Functionally, catalyzes the base-exchange of a guanine (G) residue with the queuine precursor 7-aminomethyl-7-deazaguanine (PreQ1) at position 34 (anticodon wobble position) in tRNAs with GU(N) anticodons (tRNA-Asp, -Asn, -His and -Tyr). Catalysis occurs through a double-displacement mechanism. The nucleophile active site attacks the C1' of nucleotide 34 to detach the guanine base from the RNA, forming a covalent enzyme-RNA intermediate. The proton acceptor active site deprotonates the incoming PreQ1, allowing a nucleophilic attack on the C1' of the ribose to form the product. After dissociation, two additional enzymatic reactions on the tRNA convert PreQ1 to queuine (Q), resulting in the hypermodified nucleoside queuosine (7-(((4,5-cis-dihydroxy-2-cyclopenten-1-yl)amino)methyl)-7-deazaguanosine). The sequence is that of Queuine tRNA-ribosyltransferase from Photobacterium profundum (strain SS9).